The primary structure comprises 626 residues: Chaperone protein DnaK (626 aa).

Threonine 197 is modified (phosphothreonine; by autocatalysis). Residues 598–612 (AQGEQGQAAQPQAET) show a composition bias toward low complexity. A disordered region spans residues 598-626 (AQGEQGQAAQPQAETQGDDVQDVEFEEVK). The span at 613–626 (QGDDVQDVEFEEVK) shows a compositional bias: acidic residues.

The protein belongs to the heat shock protein 70 family.

In terms of biological role, acts as a chaperone. The sequence is that of Chaperone protein DnaK from Flavobacterium psychrophilum (strain ATCC 49511 / DSM 21280 / CIP 103535 / JIP02/86).